The chain runs to 195 residues: Imidazoleglycerol-phosphate dehydratase (195 aa).

Belongs to the imidazoleglycerol-phosphate dehydratase family.

The protein resides in the cytoplasm. The catalysed reaction is D-erythro-1-(imidazol-4-yl)glycerol 3-phosphate = 3-(imidazol-4-yl)-2-oxopropyl phosphate + H2O. Its pathway is amino-acid biosynthesis; L-histidine biosynthesis; L-histidine from 5-phospho-alpha-D-ribose 1-diphosphate: step 6/9. In Thermotoga maritima (strain ATCC 43589 / DSM 3109 / JCM 10099 / NBRC 100826 / MSB8), this protein is Imidazoleglycerol-phosphate dehydratase.